The following is a 310-amino-acid chain: Olfactory receptor 4K14 (310 aa).

The Extracellular portion of the chain corresponds to 1-25 (MDPQNYSLVSEFVLHGLCTSRHLQN). Asparagine 5 is a glycosylation site (N-linked (GlcNAc...) asparagine). Residues 26–49 (FFFIFFFGVYVAIMLGNLLILVTV) traverse the membrane as a helical segment. At 50–58 (ISDPCLHSS) the chain is on the cytoplasmic side. A helical membrane pass occupies residues 59–80 (PMYFLLGNLAFLDMWLASFATP). Topologically, residues 81–101 (KMIRDFLSDQKLISFGGCMAQ) are extracellular. An intrachain disulfide couples cysteine 98 to cysteine 190. The helical transmembrane segment at 102-121 (IFFLHFTGGAEMVLLVSMAY) threads the bilayer. Over 122–140 (DRYVAICKPLHYMTLMSWQ) the chain is Cytoplasmic. A helical transmembrane segment spans residues 141–159 (TCIRLVLASWVVGFVHSIS). Residues 160-196 (QVAFTVNLPYCGPNEVDSFFCDLPLVIKLACMDTYVL) lie on the Extracellular side of the membrane. Residues 197-220 (GIIMISDSGLLSLSCFLLLLISYT) traverse the membrane as a helical segment. Residues 221–236 (VILLAIRQRAAGSTSK) are Cytoplasmic-facing. Residues 237–259 (ALSTCSAHIMVVTLFFGPCIFVY) traverse the membrane as a helical segment. The Extracellular segment spans residues 260–270 (VRPFSRFSVDK). Residues 271-290 (LLSVFYTIFTPLLNPIIYTL) form a helical membrane-spanning segment. Topologically, residues 291–310 (RNEEMKAAMKKLQNRRVTFQ) are cytoplasmic.

The protein belongs to the G-protein coupled receptor 1 family.

It localises to the cell membrane. Functionally, odorant receptor. The chain is Olfactory receptor 4K14 (OR4K14) from Homo sapiens (Human).